Consider the following 520-residue polypeptide: Phosphoenolpyruvate carboxykinase (ATP) (520 aa).

Residues Arg61, Phe196, and Lys202 each coordinate substrate. Residues Lys202, His222, and 238-246 (GLSGTGKTT) contribute to the ATP site. Mn(2+)-binding residues include Lys202 and His222. Asp259 is a Mn(2+) binding site. ATP is bound by residues Glu287, Arg324, 443–444 (RI), and Thr449. Arg324 is a substrate binding site.

The protein belongs to the phosphoenolpyruvate carboxykinase (ATP) family. Mn(2+) serves as cofactor.

It localises to the cytoplasm. The catalysed reaction is oxaloacetate + ATP = phosphoenolpyruvate + ADP + CO2. It participates in carbohydrate biosynthesis; gluconeogenesis. In terms of biological role, involved in the gluconeogenesis. Catalyzes the conversion of oxaloacetate (OAA) to phosphoenolpyruvate (PEP) through direct phosphoryl transfer between the nucleoside triphosphate and OAA. The polypeptide is Phosphoenolpyruvate carboxykinase (ATP) (Amoebophilus asiaticus (strain 5a2)).